Here is a 159-residue protein sequence, read N- to C-terminus: Ribosome maturation factor RimP (159 aa).

It belongs to the RimP family.

Its subcellular location is the cytoplasm. Its function is as follows. Required for maturation of 30S ribosomal subunits. The chain is Ribosome maturation factor RimP from Geobacter metallireducens (strain ATCC 53774 / DSM 7210 / GS-15).